A 74-amino-acid polypeptide reads, in one-letter code: U-scoloptoxin(09)-Sm3a (74 aa).

Residues 1–22 form the signal peptide; sequence MNANSIFLCFFIMLIGCTLTHS.

This sequence belongs to the scoloptoxin-09 family. Contains 3 disulfide bonds. Expressed by the venom gland.

The protein resides in the secreted. The sequence is that of U-scoloptoxin(09)-Sm3a from Scolopendra morsitans (Tanzanian blue ringleg centipede).